Here is a 64-residue protein sequence, read N- to C-terminus: Small ribosomal subunit protein eS17 (64 aa).

Belongs to the eukaryotic ribosomal protein eS17 family.

The chain is Small ribosomal subunit protein eS17 from Methanococcoides burtonii (strain DSM 6242 / NBRC 107633 / OCM 468 / ACE-M).